We begin with the raw amino-acid sequence, 485 residues long: Glycogen synthase (485 aa).

Lys-18 lines the ADP-alpha-D-glucose pocket.

It belongs to the glycosyltransferase 1 family. Bacterial/plant glycogen synthase subfamily.

It catalyses the reaction [(1-&gt;4)-alpha-D-glucosyl](n) + ADP-alpha-D-glucose = [(1-&gt;4)-alpha-D-glucosyl](n+1) + ADP + H(+). It participates in glycan biosynthesis; glycogen biosynthesis. Functionally, synthesizes alpha-1,4-glucan chains using ADP-glucose. This is Glycogen synthase from Dechloromonas aromatica (strain RCB).